The chain runs to 463 residues: 23S rRNA (uracil(1939)-C(5))-methyltransferase RlmD (463 aa).

The TRAM domain occupies 14 to 78 (AVAPGSDPVV…PSYEQAHLLE (65 aa)). 4 residues coordinate [4Fe-4S] cluster: Cys-91, Cys-97, Cys-100, and Cys-179. Positions 287, 316, 321, 337, 365, and 386 each coordinate S-adenosyl-L-methionine. Catalysis depends on Cys-419, which acts as the Nucleophile.

This sequence belongs to the class I-like SAM-binding methyltransferase superfamily. RNA M5U methyltransferase family. RlmD subfamily.

It catalyses the reaction uridine(1939) in 23S rRNA + S-adenosyl-L-methionine = 5-methyluridine(1939) in 23S rRNA + S-adenosyl-L-homocysteine + H(+). In terms of biological role, catalyzes the formation of 5-methyl-uridine at position 1939 (m5U1939) in 23S rRNA. This Cupriavidus pinatubonensis (strain JMP 134 / LMG 1197) (Cupriavidus necator (strain JMP 134)) protein is 23S rRNA (uracil(1939)-C(5))-methyltransferase RlmD.